The following is a 299-amino-acid chain: MARAIWKGAISFGLVHIPVALVSATTSNSVDFDWLDKRSMDPVGYKRINKVTGKEVTKENIVKGVLHEKDRYVVLSEEEIRSAHPKSTQTIDIFAFVDSQQIPLQNIDTPYFLTPDKRGEKVYALLRETLVDTQKVALANVVLHTREHLAAVMPLESALVMVILRWPADVRELDALELTEAVTDARLTKSERDMARRLVKDMSADWQPDQYHDTFQEKIMQLVQTKAGEGKIEDVETDPGEEERKSADVIDLTDLLRRSLAGKSSASKTRKPAAKDKVADKQSPKPKRPAVRKKTGKAS.

The region spanning 10 to 188 is the Ku domain; sequence ISFGLVHIPV…TEAVTDARLT (179 aa). Disordered regions lie at residues 227–249 and 261–299; these read AGEG…SADV and AGKS…GKAS. Residues 273-283 show a composition bias toward basic and acidic residues; it reads AAKDKVADKQS. The segment covering 284–299 has biased composition (basic residues); the sequence is PKPKRPAVRKKTGKAS.

It belongs to the prokaryotic Ku family. Homodimer. Interacts with LigD.

With LigD forms a non-homologous end joining (NHEJ) DNA repair enzyme, which repairs dsDNA breaks with reduced fidelity. Binds linear dsDNA with 5'- and 3'- overhangs but not closed circular dsDNA nor ssDNA. Recruits and stimulates the ligase activity of LigD. The protein is Non-homologous end joining protein Ku of Pseudomonas syringae pv. tomato (strain ATCC BAA-871 / DC3000).